The chain runs to 338 residues: Methionine import ATP-binding protein MetN 1 (338 aa).

Residues 2 to 241 enclose the ABC transporter domain; sequence IQLENIEKHY…PNEKLTKDFI (240 aa). 38–45 lines the ATP pocket; the sequence is GYSGAGKS.

This sequence belongs to the ABC transporter superfamily. Methionine importer (TC 3.A.1.24) family. The complex is composed of two ATP-binding proteins (MetN), two transmembrane proteins (MetI) and a solute-binding protein (MetQ).

It is found in the cell membrane. The enzyme catalyses L-methionine(out) + ATP + H2O = L-methionine(in) + ADP + phosphate + H(+). The catalysed reaction is D-methionine(out) + ATP + H2O = D-methionine(in) + ADP + phosphate + H(+). Functionally, part of the ABC transporter complex MetNIQ involved in methionine import. Responsible for energy coupling to the transport system. The polypeptide is Methionine import ATP-binding protein MetN 1 (Oceanobacillus iheyensis (strain DSM 14371 / CIP 107618 / JCM 11309 / KCTC 3954 / HTE831)).